The following is a 242-amino-acid chain: Probable transcriptional regulatory protein Cphy_2507 (242 aa).

It belongs to the TACO1 family.

The protein localises to the cytoplasm. The sequence is that of Probable transcriptional regulatory protein Cphy_2507 from Lachnoclostridium phytofermentans (strain ATCC 700394 / DSM 18823 / ISDg) (Clostridium phytofermentans).